The following is a 208-amino-acid chain: ATP-dependent Clp protease proteolytic subunit 1 (208 aa).

The active-site Nucleophile is the Ser-108. His-133 is a catalytic residue.

It belongs to the peptidase S14 family. Fourteen ClpP subunits assemble into 2 heptameric rings which stack back to back to give a disk-like structure with a central cavity, resembling the structure of eukaryotic proteasomes.

It localises to the cytoplasm. The catalysed reaction is Hydrolysis of proteins to small peptides in the presence of ATP and magnesium. alpha-casein is the usual test substrate. In the absence of ATP, only oligopeptides shorter than five residues are hydrolyzed (such as succinyl-Leu-Tyr-|-NHMec, and Leu-Tyr-Leu-|-Tyr-Trp, in which cleavage of the -Tyr-|-Leu- and -Tyr-|-Trp bonds also occurs).. In terms of biological role, cleaves peptides in various proteins in a process that requires ATP hydrolysis. Has a chymotrypsin-like activity. Plays a major role in the degradation of misfolded proteins. The chain is ATP-dependent Clp protease proteolytic subunit 1 from Corynebacterium glutamicum (strain ATCC 13032 / DSM 20300 / JCM 1318 / BCRC 11384 / CCUG 27702 / LMG 3730 / NBRC 12168 / NCIMB 10025 / NRRL B-2784 / 534).